Reading from the N-terminus, the 394-residue chain is Elongation factor Tu (394 aa).

Residues Lys-10–Glu-204 enclose the tr-type G domain. The G1 stretch occupies residues Gly-19–Thr-26. Residue Gly-19 to Thr-26 coordinates GTP. Thr-26 contacts Mg(2+). The interval Gly-60–Asn-64 is G2. Residues Asp-81 to Gly-84 are G3. GTP-binding positions include Asp-81–His-85 and Asn-136–Asp-139. Positions Asn-136–Asp-139 are G4. Positions Ser-174–Leu-176 are G5.

The protein belongs to the TRAFAC class translation factor GTPase superfamily. Classic translation factor GTPase family. EF-Tu/EF-1A subfamily. In terms of assembly, monomer.

It is found in the cytoplasm. It catalyses the reaction GTP + H2O = GDP + phosphate + H(+). Functionally, GTP hydrolase that promotes the GTP-dependent binding of aminoacyl-tRNA to the A-site of ribosomes during protein biosynthesis. The sequence is that of Elongation factor Tu from Francisella tularensis subsp. holarctica (strain FTNF002-00 / FTA).